The sequence spans 296 residues: Zinc finger CCCH-type antiviral protein 1-like (296 aa).

An N-acetylalanine modification is found at A2. 2 C3H1-type zinc fingers span residues 111–136 (LCRR…HDIH) and 198–219 (VCKS…HQLI).

This Mus musculus (Mouse) protein is Zinc finger CCCH-type antiviral protein 1-like (Zc3hav1l).